Consider the following 462-residue polypeptide: Putative E3 ubiquitin-protein ligase XBAT35 (462 aa).

3 ANK repeats span residues 6-35 (SKGELLYQQVSYGNSEGIRALHRDGGDLEW), 39-69 (EGKTPLILACMNSELFDVAKTLIELGSNVNA), and 75-104 (HAGTPLHHAAKRGLENTVKLLLSHGANPLV). Disordered regions lie at residues 277–341 (HPPV…GKAS) and 356–402 (SSPS…EGER). A compositionally biased stretch (polar residues) spans 304-317 (SLHTTMSDPSNLNH). Positions 319-341 (SIGQASSSSGPSSSTAPPSGKAS) are enriched in low complexity. The RING-type zinc-finger motif lies at 411–450 (CAICLDAPSEAVCVPCGHVAGCMSCLKEIKSKNWGCPVCR).

It catalyses the reaction S-ubiquitinyl-[E2 ubiquitin-conjugating enzyme]-L-cysteine + [acceptor protein]-L-lysine = [E2 ubiquitin-conjugating enzyme]-L-cysteine + N(6)-ubiquitinyl-[acceptor protein]-L-lysine.. It functions in the pathway protein modification; protein ubiquitination. No E3 ubiquitin-protein ligase activity observed when associated with the E2 enzyme UBC8 in vitro. In Arabidopsis thaliana (Mouse-ear cress), this protein is Putative E3 ubiquitin-protein ligase XBAT35 (XBAT35).